The chain runs to 351 residues: N6-Methyl-AMP deaminase (351 aa).

Zn(2+)-binding residues include His-23 and His-25. Residues His-25, Asn-27, His-73, Ser-105 to Arg-108, Asp-147, and Gly-180 contribute to the N(6)-methyl-AMP site. His-207 serves as a coordination point for Zn(2+). 3 residues coordinate N(6)-methyl-AMP: Glu-210, Asp-292, and Asp-293. Glu-210 acts as the Proton donor in catalysis. Asp-292 is a binding site for Zn(2+).

The protein belongs to the metallo-dependent hydrolases superfamily. Adenosine and AMP deaminases family. Monomer. The cofactor is Zn(2+).

The enzyme catalyses N(6)-methyl-AMP + H2O + H(+) = IMP + methylamine. Functionally, catalyzes the hydrolysis of the free cytosolic methylated adenosine nucleotide N(6)-methyl-AMP (N6-mAMP) to produce inositol monophosphate (IMP) and methylamine. Is required for the catabolism of cytosolic N6-mAMP, which is derived from the degradation of mRNA containing N6-methylated adenine (m6A). In Bos taurus (Bovine), this protein is N6-Methyl-AMP deaminase.